The sequence spans 274 residues: HTH-type transcriptional regulator GadX (274 aa).

The region spanning 145–242 (TRVCTVINNN…GMTPTEYQER (98 aa)) is the HTH araC/xylS-type domain. 2 DNA-binding regions (H-T-H motif) span residues 162–183 (ARIA…REEG) and 209–232 (IKRV…RNYY).

In terms of assembly, homodimer.

Positively regulates the expression of about fifteen genes involved in acid resistance such as gadA, gadB and gadC. Depending on the conditions (growth phase and medium), can repress gadW. The protein is HTH-type transcriptional regulator GadX (gadX) of Escherichia coli O6:H1 (strain CFT073 / ATCC 700928 / UPEC).